Reading from the N-terminus, the 322-residue chain is Transaldolase (322 aa).

The active-site Schiff-base intermediate with substrate is K136.

Belongs to the transaldolase family. Type 1 subfamily. Homodimer.

It localises to the cytoplasm. It catalyses the reaction D-sedoheptulose 7-phosphate + D-glyceraldehyde 3-phosphate = D-erythrose 4-phosphate + beta-D-fructose 6-phosphate. Its pathway is carbohydrate degradation; pentose phosphate pathway; D-glyceraldehyde 3-phosphate and beta-D-fructose 6-phosphate from D-ribose 5-phosphate and D-xylulose 5-phosphate (non-oxidative stage): step 2/3. Functionally, transaldolase is important for the balance of metabolites in the pentose-phosphate pathway. In Xanthomonas oryzae pv. oryzae (strain MAFF 311018), this protein is Transaldolase.